The chain runs to 199 residues: Peptidyl-tRNA hydrolase (199 aa).

Tyr-15 is a tRNA binding site. Catalysis depends on His-20, which acts as the Proton acceptor. Residues Tyr-66, Asn-68, and Asn-114 each coordinate tRNA.

This sequence belongs to the PTH family. Monomer.

It localises to the cytoplasm. The enzyme catalyses an N-acyl-L-alpha-aminoacyl-tRNA + H2O = an N-acyl-L-amino acid + a tRNA + H(+). Hydrolyzes ribosome-free peptidyl-tRNAs (with 1 or more amino acids incorporated), which drop off the ribosome during protein synthesis, or as a result of ribosome stalling. In terms of biological role, catalyzes the release of premature peptidyl moieties from peptidyl-tRNA molecules trapped in stalled 50S ribosomal subunits, and thus maintains levels of free tRNAs and 50S ribosomes. This chain is Peptidyl-tRNA hydrolase, found in Burkholderia ambifaria (strain MC40-6).